The sequence spans 130 residues: Gonadotropin subunit beta-1 (130 aa).

A signal peptide spans 1–18 (MRMHFVVMVMLLPALMMA). Disulfide bonds link Cys-26-Cys-74, Cys-40-Cys-89, Cys-51-Cys-105, Cys-55-Cys-107, and Cys-110-Cys-117. Asn-30 is a glycosylation site (N-linked (GlcNAc...) asparagine).

The protein belongs to the glycoprotein hormones subunit beta family. In terms of assembly, heterodimer of an alpha and a beta chain.

It localises to the secreted. Its function is as follows. Involved in gametogenesis and steroidogenesis. The polypeptide is Gonadotropin subunit beta-1 (cgba) (Cyprinus carpio (Common carp)).